Consider the following 253-residue polypeptide: Protein C1orf43 homolog (253 aa).

Residues V11–V31 form a helical membrane-spanning segment. The tract at residues S194–E213 is disordered.

Its subcellular location is the membrane. It localises to the golgi apparatus. The protein localises to the mitochondrion. In terms of biological role, general regulator of phagocytosis. Required to uptake Gram negative bacterium by macrophages. This is Protein C1orf43 homolog from Bos taurus (Bovine).